Consider the following 329-residue polypeptide: GTP 3',8-cyclase (329 aa).

The Radical SAM core domain occupies 8 to 234; that stretch reads AFARKFYYLR…QLRQRSDGPA (227 aa). Arginine 17 is a GTP binding site. Positions 24 and 28 each coordinate [4Fe-4S] cluster. Position 30 (tyrosine 30) interacts with S-adenosyl-L-methionine. Residue cysteine 31 coordinates [4Fe-4S] cluster. GTP is bound at residue arginine 68. Glycine 72 serves as a coordination point for S-adenosyl-L-methionine. Threonine 99 serves as a coordination point for GTP. Serine 123 lines the S-adenosyl-L-methionine pocket. GTP is bound at residue lysine 160. Methionine 194 serves as a coordination point for S-adenosyl-L-methionine. [4Fe-4S] cluster is bound by residues cysteine 257 and cysteine 260. 262 to 264 contacts GTP; it reads RLR. Cysteine 274 is a binding site for [4Fe-4S] cluster.

It belongs to the radical SAM superfamily. MoaA family. As to quaternary structure, monomer and homodimer. [4Fe-4S] cluster is required as a cofactor.

The catalysed reaction is GTP + AH2 + S-adenosyl-L-methionine = (8S)-3',8-cyclo-7,8-dihydroguanosine 5'-triphosphate + 5'-deoxyadenosine + L-methionine + A + H(+). It functions in the pathway cofactor biosynthesis; molybdopterin biosynthesis. In terms of biological role, catalyzes the cyclization of GTP to (8S)-3',8-cyclo-7,8-dihydroguanosine 5'-triphosphate. In Salmonella heidelberg (strain SL476), this protein is GTP 3',8-cyclase.